Here is a 403-residue protein sequence, read N- to C-terminus: Phosphopentomutase (403 aa).

Positions 13, 298, 303, 339, 340, and 351 each coordinate Mn(2+).

Belongs to the phosphopentomutase family. Requires Mn(2+) as cofactor.

Its subcellular location is the cytoplasm. It carries out the reaction 2-deoxy-alpha-D-ribose 1-phosphate = 2-deoxy-D-ribose 5-phosphate. It catalyses the reaction alpha-D-ribose 1-phosphate = D-ribose 5-phosphate. It functions in the pathway carbohydrate degradation; 2-deoxy-D-ribose 1-phosphate degradation; D-glyceraldehyde 3-phosphate and acetaldehyde from 2-deoxy-alpha-D-ribose 1-phosphate: step 1/2. Functionally, isomerase that catalyzes the conversion of deoxy-ribose 1-phosphate (dRib-1-P) and ribose 1-phosphate (Rib-1-P) to deoxy-ribose 5-phosphate (dRib-5-P) and ribose 5-phosphate (Rib-5-P), respectively. This Streptococcus thermophilus (strain ATCC BAA-491 / LMD-9) protein is Phosphopentomutase.